Reading from the N-terminus, the 208-residue chain is Calaxin (208 aa).

EF-hand domains follow at residues 64–99 (TDDM…FLHG), 100–135 (TLEE…SLLK), and 145–180 (GVKD…ENLL). Ca(2+) contacts are provided by Asp-77, Asp-79, Asp-81, Asp-113, Asn-115, Asp-117, Tyr-119, Glu-124, Asp-158, Asp-160, Asp-162, Lys-164, and Asp-169.

As to quaternary structure, component of the outer dynein arm-docking complex along with ODAD1, ODAD2, ODAD3 and ODAD4.

Its subcellular location is the cytoplasm. It localises to the cytoskeleton. It is found in the cilium axoneme. The protein resides in the cell projection. The protein localises to the cilium. Its subcellular location is the flagellum. Its function is as follows. Component of the outer dynein arm-docking complex (ODA-DC) that mediates outer dynein arms (ODA) binding onto the doublet microtubule. Seems to regulate the assembly of both ODAs and their axonemal docking complex onto ciliary microtubules. Regulates ciliary and flagellar motility and is required for cilia-driven determination of body laterality. The protein is Calaxin (clxn) of Xenopus laevis (African clawed frog).